The following is a 603-amino-acid chain: Arginine--tRNA ligase (603 aa).

The short motif at 143 to 153 is the 'HIGH' region element; that stretch reads PNIAKEMHVGH.

Belongs to the class-I aminoacyl-tRNA synthetase family. Monomer.

Its subcellular location is the cytoplasm. The catalysed reaction is tRNA(Arg) + L-arginine + ATP = L-arginyl-tRNA(Arg) + AMP + diphosphate. The polypeptide is Arginine--tRNA ligase (Prochlorococcus marinus (strain MIT 9211)).